Consider the following 179-residue polypeptide: Inner membrane-spanning protein YciB (179 aa).

The next 5 helical transmembrane spans lie at Ile22–Val42, Met50–Asn70, Trp76–Met96, Leu121–Leu141, and Phe149–Ile169.

This sequence belongs to the YciB family.

The protein localises to the cell inner membrane. Functionally, plays a role in cell envelope biogenesis, maintenance of cell envelope integrity and membrane homeostasis. The sequence is that of Inner membrane-spanning protein YciB from Salmonella dublin (strain CT_02021853).